The chain runs to 188 residues: MKQPNKAPRANIAAPKGTATPKRRRKTRDELDAEARDRKRQKKHSGNRSGARTNVEGSNKKGHSQTQEKDPRVGSKVPVPLVIESQVKAKSMPKPVEKNVVKPRLTPEEELAKLENDERLDALLDRLDNDEVLNKEDQAYVDLTLDRIDALMEQLGIELGDDEDDVEREEKQEDILQLLKRGNPKDTF.

2 disordered regions span residues 1–80 (MKQP…VPVP) and 162–188 (DEDD…KDTF). The span at 27–37 (TRDELDAEARD) shows a compositional bias: basic and acidic residues. The span at 47 to 57 (NRSGARTNVEG) shows a compositional bias: polar residues.

It belongs to the YihI family. In terms of assembly, interacts with Der.

A GTPase-activating protein (GAP) that modifies Der/EngA GTPase function. May play a role in ribosome biogenesis. This chain is Der GTPase-activating protein YihI, found in Yersinia pseudotuberculosis serotype O:1b (strain IP 31758).